A 799-amino-acid chain; its full sequence is Phenylalanine--tRNA ligase beta subunit (799 aa).

The region spanning glycine 39–asparagine 150 is the tRNA-binding domain. The B5 domain occupies phenylalanine 402–arginine 478. The Mg(2+) site is built by aspartate 456, aspartate 462, glutamate 465, and glutamate 466. The FDX-ACB domain occupies alanine 705–lysine 798.

The protein belongs to the phenylalanyl-tRNA synthetase beta subunit family. Type 1 subfamily. Tetramer of two alpha and two beta subunits. Mg(2+) serves as cofactor.

It localises to the cytoplasm. It catalyses the reaction tRNA(Phe) + L-phenylalanine + ATP = L-phenylalanyl-tRNA(Phe) + AMP + diphosphate + H(+). The chain is Phenylalanine--tRNA ligase beta subunit from Protochlamydia amoebophila (strain UWE25).